Consider the following 815-residue polypeptide: Cell division cycle protein 48 (815 aa).

The interval methionine 1 to glutamate 30 is disordered. A compositionally biased stretch (basic and acidic residues) spans threonine 8–glutamine 18. Residues proline 267 to leucine 273, asparagine 368, histidine 404, and glycine 541 to leucine 546 contribute to the ATP site. The tract at residues aspartate 794 to alanine 815 is disordered. Over residues serine 795 to serine 804 the composition is skewed to polar residues.

The protein belongs to the AAA ATPase family. In terms of assembly, component of the ribosome quality control complex (RQC), composed of the E3 ubiquitin ligase rkr1/ltn1, rqc1 and mtr1/rqc2, as well as cdc48 and its ubiquitin-binding cofactors. RQC forms a stable complex with 60S ribosomal subunits. Interacts with ubx2 and ubx3. Interacts with lub1. Interacts with rbd2 (via C-terminal SHP box); the interaction is required for rbd2-mediated cleavage of sre1 and sre2.

The protein resides in the cytoplasm. It is found in the nucleus. The enzyme catalyses ATP + H2O = ADP + phosphate + H(+). With respect to regulation, the first ATP-binding region has low ATPase activity. The second ATP-binding region is responsible for ATPase activity. ATP binding to the first ATP-binding region induces intrinsic activity of the second ATP-binding region. While ATP binding to the first ATP-binding region appears to prevent ATP hydrolysis by the second ATP-binding region, ADP-binding to first region promotes the coordinate and cooperative ATPase cycle of the second ATP-binding region. ATP binding to the first ATP-binding region induces a conformational change, promoting the rotation of the first ATP-binding region relative to the second ATP-binding region in the hexamer. Its function is as follows. ATP-dependent chaperone which probably uses the energy provided by ATP hydrolysis to generate mechanical force to unfold substrate proteins, disassemble protein complexes, and disaggregate protein aggregates. By recruiting and promoting the degradation of ubiquitinated proteins, plays a role in the ubiquitin fusion degradation (UFD) pathway. Has a role in the endoplasmic reticulum-associated degradation (ERAD) pathway which mediates the cytoplasmic elimination of misfolded proteins exported from the ER. Involved in spindle disassembly. Component of the ribosome quality control complex (RQC), a ribosome-associated complex that mediates ubiquitination and extraction of incompletely synthesized nascent chains for proteasomal degradation. CDC48 may provide the mechanical force that dislodges the polyubiquitinated nascent peptides from the exit channel. Required for ribophagy, a process which relocalizes ribosomal particles into the vacuole for degradation in response to starvation. Has a role in substrate recognition mediating rbd2-dependent cleavage of sterol regulatory element-binding protein sre1 and sre2. The polypeptide is Cell division cycle protein 48 (Schizosaccharomyces pombe (strain 972 / ATCC 24843) (Fission yeast)).